Reading from the N-terminus, the 684-residue chain is uncharacterized protein (684 aa).

Residues 54–239 (LKYLYNKKDV…LLFNRDFEVV (186 aa)) enclose the Helicase ATP-binding domain. Position 67-74 (67-74 (TSTASGKS)) interacts with ATP. Positions 181–184 (DELH) match the DEVH box motif. In terms of domain architecture, Helicase C-terminal spans 264–419 (LLRRLIENLV…YMPVNIKNRF (156 aa)).

The protein belongs to the helicase family.

This is an uncharacterized protein from Methanocaldococcus jannaschii (strain ATCC 43067 / DSM 2661 / JAL-1 / JCM 10045 / NBRC 100440) (Methanococcus jannaschii).